Consider the following 266-residue polypeptide: Translation initiation factor 2 subunit alpha (266 aa).

The 72-residue stretch at 12-83 (GEILIATVKQ…RKGTVDVSLK (72 aa)) folds into the S1 motif domain.

The protein belongs to the eIF-2-alpha family. In terms of assembly, heterotrimer composed of an alpha, a beta and a gamma chain.

In terms of biological role, eIF-2 functions in the early steps of protein synthesis by forming a ternary complex with GTP and initiator tRNA. In Saccharolobus solfataricus (strain ATCC 35092 / DSM 1617 / JCM 11322 / P2) (Sulfolobus solfataricus), this protein is Translation initiation factor 2 subunit alpha.